The primary structure comprises 351 residues: Cardiolipin synthase (CMP-forming) (351 aa).

The segment at Pro-74–Ala-120 is disordered. The span at Pro-76–Ala-120 shows a compositional bias: low complexity. The next 5 membrane-spanning stretches (helical) occupy residues Pro-139–Val-159, Val-191–Ala-211, Ala-251–Gly-271, Pro-280–Leu-300, and Leu-321–Gly-341.

This sequence belongs to the CDP-alcohol phosphatidyltransferase class-I family. Requires Mn(2+) as cofactor.

It localises to the mitochondrion inner membrane. It catalyses the reaction a CDP-1,2-diacyl-sn-glycerol + a 1,2-diacyl-sn-glycero-3-phospho-(1'-sn-glycerol) = a cardiolipin + CMP + H(+). Functionally, catalyzes the synthesis of cardiolipin (CL) (diphosphatidylglycerol) by specifically transferring a phosphatidyl group from CDP-diacylglycerol to phosphatidylglycerol (PG). CL is a key phospholipid in mitochondrial membranes and plays important roles in maintaining the functional integrity and dynamics of mitochondria under both optimal and stress conditions. Cannot catalyze the phosphatidyl group transfer from one PG molecule to another to form CL. This is Cardiolipin synthase (CMP-forming) from Chlamydomonas reinhardtii (Chlamydomonas smithii).